The primary structure comprises 544 residues: Pectinesterase 3 (544 aa).

N-linked (GlcNAc...) asparagine glycans are attached at residues Asn-174, Asn-257, and Asn-291. Substrate is bound by residues Thr-306 and Gln-336. Asp-359 (proton donor) is an active-site residue. The active-site Nucleophile is the Asp-380. Arg-448 and Trp-450 together coordinate substrate. Residue Asn-532 is glycosylated (N-linked (GlcNAc...) asparagine).

It in the N-terminal section; belongs to the PMEI family. In the C-terminal section; belongs to the pectinesterase family.

The protein localises to the secreted. It is found in the cell wall. It catalyses the reaction [(1-&gt;4)-alpha-D-galacturonosyl methyl ester](n) + n H2O = [(1-&gt;4)-alpha-D-galacturonosyl](n) + n methanol + n H(+). The protein operates within glycan metabolism; pectin degradation; 2-dehydro-3-deoxy-D-gluconate from pectin: step 1/5. Functionally, acts in the modification of cell walls via demethylesterification of cell wall pectin. The sequence is that of Pectinesterase 3 (PME3) from Solanum lycopersicum (Tomato).